Reading from the N-terminus, the 540-residue chain is Glucose-6-phosphate isomerase (540 aa).

Glutamate 350 acts as the Proton donor in catalysis. Active-site residues include histidine 381 and lysine 503.

Belongs to the GPI family.

It localises to the cytoplasm. It carries out the reaction alpha-D-glucose 6-phosphate = beta-D-fructose 6-phosphate. Its pathway is carbohydrate biosynthesis; gluconeogenesis. It participates in carbohydrate degradation; glycolysis; D-glyceraldehyde 3-phosphate and glycerone phosphate from D-glucose: step 2/4. Its function is as follows. Catalyzes the reversible isomerization of glucose-6-phosphate to fructose-6-phosphate. This is Glucose-6-phosphate isomerase from Burkholderia pseudomallei (strain 1710b).